The following is a 262-amino-acid chain: Hydroxyethylthiazole kinase (262 aa).

Met44 is a binding site for substrate. Positions 118 and 166 each coordinate ATP. Position 193 (Gly193) interacts with substrate.

It belongs to the Thz kinase family. It depends on Mg(2+) as a cofactor.

It carries out the reaction 5-(2-hydroxyethyl)-4-methylthiazole + ATP = 4-methyl-5-(2-phosphooxyethyl)-thiazole + ADP + H(+). It participates in cofactor biosynthesis; thiamine diphosphate biosynthesis; 4-methyl-5-(2-phosphoethyl)-thiazole from 5-(2-hydroxyethyl)-4-methylthiazole: step 1/1. In terms of biological role, catalyzes the phosphorylation of the hydroxyl group of 4-methyl-5-beta-hydroxyethylthiazole (THZ). This is Hydroxyethylthiazole kinase from Chlamydia felis (strain Fe/C-56) (Chlamydophila felis).